Consider the following 248-residue polypeptide: Tryptophan synthase alpha chain (248 aa).

Residues E36 and D47 each act as proton acceptor in the active site.

This sequence belongs to the TrpA family. In terms of assembly, tetramer of two alpha and two beta chains.

It catalyses the reaction (1S,2R)-1-C-(indol-3-yl)glycerol 3-phosphate + L-serine = D-glyceraldehyde 3-phosphate + L-tryptophan + H2O. The protein operates within amino-acid biosynthesis; L-tryptophan biosynthesis; L-tryptophan from chorismate: step 5/5. The alpha subunit is responsible for the aldol cleavage of indoleglycerol phosphate to indole and glyceraldehyde 3-phosphate. The polypeptide is Tryptophan synthase alpha chain (Pyrococcus abyssi (strain GE5 / Orsay)).